The chain runs to 255 residues: MLLVIDIGNTNTVFGIFEDQKLVRDWRIRTKRNTTEDELNVLLTGLFTGSSVALADISRAVIASVVPPVERIYSAFCKKYLRCTPQWVSPANCAGITIRYANPQEVGADRIVNAVGAHAKYQTDLIVVDFGTATTFDLVSADGAYEGGVIAPGIGISADALFSHASKLPRVDLMTVPETVVGKDTAGSIKSGIIFGYAGLVDGIVSRMITERGRPHKVIATGGLAPLIAGVSATIEAVEPNLTLEGLRIIGSSAE.

6–13 (DIGNTNTV) serves as a coordination point for ATP. Substrate contacts are provided by residues tyrosine 100 and 107 to 110 (GADR). Aspartate 109 (proton acceptor) is an active-site residue. K(+) is bound at residue aspartate 129. Threonine 132 contributes to the ATP binding site. Position 185 (threonine 185) interacts with substrate.

The protein belongs to the type III pantothenate kinase family. As to quaternary structure, homodimer. It depends on NH4(+) as a cofactor. The cofactor is K(+).

Its subcellular location is the cytoplasm. The catalysed reaction is (R)-pantothenate + ATP = (R)-4'-phosphopantothenate + ADP + H(+). It functions in the pathway cofactor biosynthesis; coenzyme A biosynthesis; CoA from (R)-pantothenate: step 1/5. Its function is as follows. Catalyzes the phosphorylation of pantothenate (Pan), the first step in CoA biosynthesis. The polypeptide is Type III pantothenate kinase (Desulfosudis oleivorans (strain DSM 6200 / JCM 39069 / Hxd3) (Desulfococcus oleovorans)).